The sequence spans 96 residues: Acylphosphatase (96 aa).

Positions 9–96 (CAEIYVSGRV…DTFTDFFIKR (88 aa)) constitute an Acylphosphatase-like domain. Catalysis depends on residues Arg-24 and Asn-42.

Belongs to the acylphosphatase family.

The enzyme catalyses an acyl phosphate + H2O = a carboxylate + phosphate + H(+). The sequence is that of Acylphosphatase (acyP) from Methanococcoides burtonii (strain DSM 6242 / NBRC 107633 / OCM 468 / ACE-M).